The following is a 1405-amino-acid chain: DNA-directed RNA polymerase subunit beta' (1405 aa).

4 residues coordinate Zn(2+): Cys-70, Cys-72, Cys-85, and Cys-88. Mg(2+) contacts are provided by Asp-460, Asp-462, and Asp-464. Cys-814, Cys-888, Cys-895, and Cys-898 together coordinate Zn(2+).

The protein belongs to the RNA polymerase beta' chain family. The RNAP catalytic core consists of 2 alpha, 1 beta, 1 beta' and 1 omega subunit. When a sigma factor is associated with the core the holoenzyme is formed, which can initiate transcription. Requires Mg(2+) as cofactor. It depends on Zn(2+) as a cofactor.

The enzyme catalyses RNA(n) + a ribonucleoside 5'-triphosphate = RNA(n+1) + diphosphate. DNA-dependent RNA polymerase catalyzes the transcription of DNA into RNA using the four ribonucleoside triphosphates as substrates. This is DNA-directed RNA polymerase subunit beta' from Shewanella putrefaciens (strain CN-32 / ATCC BAA-453).